The chain runs to 420 residues: Protein disulfide isomerase Creld1 (420 aa).

The signal sequence occupies residues 1 to 29 (MAPLPPRGLVPSLLWCLSLFLSLPGPVWL). Over 30–362 (QPSPPPHPSP…GFFAEMTEDE (333 aa)) the chain is Extracellular. The CXXC signature appears at 46–49 (CHTC). 4 disulfides stabilise this stretch: C46/C49, C155/C169, C163/C181, and C183/C192. The EGF-like 1 domain occupies 153–193 (LPCPGGTERPCGGYGQCEGEGTRGGSGHCDCQAGYGGEACG). N205 carries N-linked (GlcNAc...) asparagine glycosylation. FU repeat units follow at residues 208 to 255 (HLVC…EQAT) and 268 to 315 (SYEC…VVCP). Residues 278–281 (CLGC) carry the CXXC motif. 4 disulfide bridges follow: C278-C281, C309-C321, C314-C330, and C332-C343. The EGF-like 2; calcium-binding domain maps to 305–342 (DVDECETVVCPGENEKCENTEGGYRCVCAEGYRQEDGI). A helical membrane pass occupies residues 363–383 (MVVLQQMFFGVIICALATLAA). Position 384 (K384) is a topological domain, cytoplasmic. The chain crosses the membrane as a helical span at residues 385–405 (GDLVFTAIFIGAVAAMTGYWL). Residues 406–420 (SERSDRVLEGFIKGR) are Extracellular-facing.

The protein belongs to the CRELD family. In terms of tissue distribution, expressed in myoblast C2C12 cells (at protein level).

The protein resides in the membrane. The enzyme catalyses Catalyzes the rearrangement of -S-S- bonds in proteins.. Its function is as follows. Protein disulfide isomerase. Promotes the localization of acetylcholine receptors (AChRs) to the plasma membrane. This chain is Protein disulfide isomerase Creld1 (Creld1), found in Mus musculus (Mouse).